A 62-amino-acid chain; its full sequence is EDEVEETLPVAEEGREKSCITWRNSCVHNDKGCCFPWSCVCWSQTVSRNSSRKEKKCQCRLW.

Residues 1-15 constitute a propeptide that is removed on maturation; sequence EDEVEETLPVAEEGR. 4 disulfides stabilise this stretch: Cys19–Cys34, Cys26–Cys39, Cys33–Cys59, and Cys41–Cys57.

The protein belongs to the neurotoxin omega-lctx family. Expressed by the venom gland.

It localises to the secreted. In terms of biological role, modulates Cav2.1/CACNA1A voltage-gated calcium channels (P/Q-type currents) in rat cerebellar Purkinje cells and hippocampal CA1-CA3 neurons. At saturating concentrations (&gt;10 nM) decelerates activation kinetics and slightly increases peak amplitude without affecting deactivation kinetics. In vivo, does not cause death when intravenously injected into mice. In rat models, through its activity on Cav2.1/CACNA1A, has an ameliorative effect on memory defects provoked by hyperstimulation of N-methyl-D-aspartate receptors (NMDARs) in the hippocampus. The chain is Omega-lycotoxin-Am1e from Alopecosa marikovskyi (Wolf spider).